The sequence spans 209 residues: Regulator of G-protein signaling 1 (209 aa).

Residues serine 85–leucine 200 enclose the RGS domain.

Interacts with GNAI1 and GNAQ. In terms of tissue distribution, detected in peripheral blood monocytes. Expression is relatively low in B-cells and chronic lymphocytic leukemia B-cells; however, in other types of malignant B-cell such as non-Hodgkin lymphoma and hairy cell leukemia, expression is constitutively high.

It is found in the cell membrane. Its subcellular location is the cytoplasm. The protein resides in the cytosol. In terms of biological role, regulates G protein-coupled receptor signaling cascades, including signaling downstream of the N-formylpeptide chemoattractant receptors and leukotriene receptors. Inhibits B cell chemotaxis toward CXCL12. Inhibits signal transduction by increasing the GTPase activity of G protein alpha subunits thereby driving them into their inactive GDP-bound form. The sequence is that of Regulator of G-protein signaling 1 (RGS1) from Homo sapiens (Human).